Reading from the N-terminus, the 284-residue chain is MTAQIIDGKAIAQTIRTQLKDKVTARKEAGQRAPGLAVILVGADPASQVYVGSKRRACEEVGFISRSYDLDSSTSEEALLSLIDECNEDPSIDGILVQLPLPEHIEESKVIERIRPDKDVDGFHPYNVGRLAQRIPVLRACTPMGIMTLIKSTGVDTFGLDAVVIGASNIVGRPMALELLLTGCTTTICHRFTRNLEDKVRQADLLVVAVGKPGFIPGDWIKPGAIVIDVGINRLEGGQLVGDVQFDDAAQHASFITPVPGGVGPMTIASLLENTLYACEQYHD.

NADP(+)-binding positions include 166 to 168 and Ile232; that span reads GAS.

This sequence belongs to the tetrahydrofolate dehydrogenase/cyclohydrolase family. In terms of assembly, homodimer.

It catalyses the reaction (6R)-5,10-methylene-5,6,7,8-tetrahydrofolate + NADP(+) = (6R)-5,10-methenyltetrahydrofolate + NADPH. The catalysed reaction is (6R)-5,10-methenyltetrahydrofolate + H2O = (6R)-10-formyltetrahydrofolate + H(+). The protein operates within one-carbon metabolism; tetrahydrofolate interconversion. Functionally, catalyzes the oxidation of 5,10-methylenetetrahydrofolate to 5,10-methenyltetrahydrofolate and then the hydrolysis of 5,10-methenyltetrahydrofolate to 10-formyltetrahydrofolate. The polypeptide is Bifunctional protein FolD (Shewanella halifaxensis (strain HAW-EB4)).